The chain runs to 334 residues: MEPRTGDAADPRGSRGGRGPSPLAGPSARQLLARLDARPLAARAAVDVAALVRRAGATLRLRRKEAVSVLDSADIEVTDSRLPHATIVDHRPQHRWLETCNAPPQLIQGKARSAPKPSQASGHFSVELVRGYAGFGLTLGGGRDVAGDTPLAVRGLLKDGPAQRCGRLEVGDLVLHINGESTQGLTHAQAVERIRAGGPQLHLVIRRPLETHPGKPRGVGEPRKGVVPSWPDRSPDPGGPEVTGSRSSSTSLVQHPPSRTTLKKTRGSPEPSPEAAADGPTVSPPERRAEDPNDQIPGSPGPWLVPSEERLSRALGVRGAAQLAQEMAAGRRRH.

Basic and acidic residues-rich tracts occupy residues 1–13 (MEPR…DPRG) and 209–224 (LETH…EPRK). Disordered stretches follow at residues 1 to 26 (MEPR…LAGP) and 209 to 306 (LETH…WLVP). A PDZ domain is found at 125 to 209 (SVELVRGYAG…QLHLVIRRPL (85 aa)). Positions 244 to 260 (GSRSSSTSLVQHPPSRT) are enriched in polar residues. Position 272 is a phosphoserine (S272).

In Homo sapiens (Human), this protein is PDZ domain-containing protein MAGIX (MAGIX).